An 86-amino-acid chain; its full sequence is Putative membrane protein insertion efficiency factor (86 aa).

This sequence belongs to the UPF0161 family.

It localises to the cell inner membrane. Its function is as follows. Could be involved in insertion of integral membrane proteins into the membrane. In Mannheimia succiniciproducens (strain KCTC 0769BP / MBEL55E), this protein is Putative membrane protein insertion efficiency factor.